We begin with the raw amino-acid sequence, 367 residues long: Carbamoyl-phosphate synthase (367 aa).

The 186-residue stretch at 111–296 (KEFYNEIGVP…SLCELVNMAA (186 aa)) folds into the ATP-grasp domain. 137 to 186 (KMEFPVVLKQGQGQGGKDIKVAESLDDVKEYFEEFDHALCEKFIEGSEIS) provides a ligand contact to ATP. Positions 253, 267, and 269 each coordinate Mg(2+). Residues Asp-253, Glu-267, and Asn-269 each contribute to the Mn(2+) site.

The protein belongs to the small carbamoyl-phosphate synthase family. Forms homodimers and homotetramers (dimers of dimers). Mg(2+) is required as a cofactor. Requires Mn(2+) as cofactor.

The enzyme catalyses hydrogencarbonate + NH4(+) + 2 ATP = carbamoyl phosphate + 2 ADP + phosphate + 2 H(+). Catalyzes the synthesis of carbamoyl phosphate from ATP, ammonium and bicarbonate. Proceeds via a three-step mechanism, i.e. the phosphorylation of hydrogencarbonate to carboxyphosphate, a nucleophilic attack of ammonia on carboxyphosphate yielding carbamate, and the phosphorylation of carbamate forming carbamoyl phosphate. In M.smithii, the predominant archaeon in the human gut, one function of this enzyme may be to sequester ammonia, a scarce nutrient in the intestine which is the major source of nitrogen in M.smithii for the biosynthesis of nucleotides, amino acids, and many other metabolites. In Methanobrevibacter smithii (strain ATCC 35061 / DSM 861 / OCM 144 / PS), this protein is Carbamoyl-phosphate synthase.